Consider the following 688-residue polypeptide: DNA ligase (688 aa).

Residues 38-42 (DEEYD), 87-88 (SL), and Glu-118 contribute to the NAD(+) site. Lys-120 serves as the catalytic N6-AMP-lysine intermediate. Arg-141, Glu-175, Lys-291, and Lys-315 together coordinate NAD(+). Residues Cys-409, Cys-412, Cys-428, and Cys-433 each contribute to the Zn(2+) site. The BRCT domain occupies 590 to 679 (VKLDILRGLT…AELKGYNFDE (90 aa)).

It belongs to the NAD-dependent DNA ligase family. LigA subfamily. Mg(2+) is required as a cofactor. Requires Mn(2+) as cofactor.

It catalyses the reaction NAD(+) + (deoxyribonucleotide)n-3'-hydroxyl + 5'-phospho-(deoxyribonucleotide)m = (deoxyribonucleotide)n+m + AMP + beta-nicotinamide D-nucleotide.. Its function is as follows. DNA ligase that catalyzes the formation of phosphodiester linkages between 5'-phosphoryl and 3'-hydroxyl groups in double-stranded DNA using NAD as a coenzyme and as the energy source for the reaction. It is essential for DNA replication and repair of damaged DNA. This is DNA ligase from Thermotoga maritima (strain ATCC 43589 / DSM 3109 / JCM 10099 / NBRC 100826 / MSB8).